We begin with the raw amino-acid sequence, 323 residues long: Aldo-keto reductase family 1 member C3 (323 aa).

NADP(+) is bound by residues 23-24 and Asp-50; that span reads TY. Tyr-55 (proton donor) is an active-site residue. Residue His-117 coordinates substrate. NADP(+)-binding positions include 166–167, Gln-190, 216–222, 270–272, and 276–280; these read SN, YSALGSQ, KSY, and RIRQN.

This sequence belongs to the aldo/keto reductase family. In terms of tissue distribution, expressed in many tissues including adrenal gland, brain, kidney, liver, lung, mammary gland, placenta, small intestine, colon, spleen, prostate and testis. High expression in prostate and mammary gland. In the prostate, higher levels in epithelial cells than in stromal cells. In the brain, expressed in medulla, spinal cord, frontotemporal lobes, thalamus, subthalamic nuclei and amygdala. Weaker expression in the hippocampus, substantia nigra and caudate.

Its subcellular location is the cytoplasm. The catalysed reaction is a 3alpha-hydroxysteroid + NADP(+) = a 3-oxosteroid + NADPH + H(+). It carries out the reaction a 3alpha-hydroxysteroid + NAD(+) = a 3-oxosteroid + NADH + H(+). The enzyme catalyses prostaglandin F2alpha + NADP(+) = prostaglandin D2 + NADPH + H(+). It catalyses the reaction prostaglandin F2alpha + NADP(+) = prostaglandin H2 + NADPH + H(+). The catalysed reaction is prostaglandin D2 + NADPH + H(+) = 11beta-prostaglandin F2 + NADP(+). It carries out the reaction prostaglandin D2-ethanolamide + NADPH + H(+) = 11beta-prostaglandin F2-ethanolamide + NADP(+). The enzyme catalyses testosterone + NAD(+) = androst-4-ene-3,17-dione + NADH + H(+). It catalyses the reaction testosterone + NADP(+) = androst-4-ene-3,17-dione + NADPH + H(+). The catalysed reaction is 17beta-estradiol + NADP(+) = estrone + NADPH + H(+). It carries out the reaction 17beta-estradiol + NAD(+) = estrone + NADH + H(+). The enzyme catalyses (20S)-hydroxypregn-4-en-3-one + NADP(+) = progesterone + NADPH + H(+). It catalyses the reaction (20S)-hydroxypregn-4-en-3-one + NAD(+) = progesterone + NADH + H(+). The catalysed reaction is 5alpha-androstane-3alpha,17beta-diol + NADP(+) = 17beta-hydroxy-5alpha-androstan-3-one + NADPH + H(+). It carries out the reaction 5alpha-androstane-3alpha,17beta-diol + NAD(+) = 17beta-hydroxy-5alpha-androstan-3-one + NADH + H(+). The enzyme catalyses androsterone + NADPH + H(+) = 5alpha-androstane-3alpha,17beta-diol + NADP(+). It catalyses the reaction 5alpha-androstane-3alpha,17beta-diol + NAD(+) = androsterone + NADH + H(+). The catalysed reaction is 5alpha-androstane-3beta,17beta-diol + NADP(+) = 17beta-hydroxy-5alpha-androstan-3-one + NADPH + H(+). It carries out the reaction 9-cis-retinol + NADP(+) = 9-cis-retinal + NADPH + H(+). It participates in steroid metabolism. With respect to regulation, strongly inhibited by nonsteroidal anti-inflammatory drugs (NSAID) including flufenamic acid and indomethacin. Also inhibited by the flavinoid, rutin, and by selective serotonin inhibitors (SSRIs). The oxidation reaction is inhibited by low micromolar concentrations of NADPH. In terms of biological role, cytosolic aldo-keto reductase that catalyzes the NADH and NADPH-dependent reduction of ketosteroids to hydroxysteroids. Acts as a NAD(P)(H)-dependent 3-, 17- and 20-ketosteroid reductase on the steroid nucleus and side chain and regulates the metabolism of androgens, estrogens and progesterone. Displays the ability to catalyze both oxidation and reduction in vitro, but most probably acts as a reductase in vivo since the oxidase activity measured in vitro is inhibited by physiological concentration of NADPH. Acts preferentially as a 17-ketosteroid reductase and has the highest catalytic efficiency of the AKR1C enzyme for the reduction of delta4-androstenedione to form testosterone. Reduces prostaglandin (PG) D2 to 11beta-prostaglandin F2, progesterone to 20alpha-hydroxyprogesterone and estrone to 17beta-estradiol. Catalyzes the transformation of the potent androgen dihydrotestosterone (DHT) into the less active form, 5-alpha-androstan-3-alpha,17-beta-diol (3-alpha-diol). Also displays retinaldehyde reductase activity toward 9-cis-retinal. In Homo sapiens (Human), this protein is Aldo-keto reductase family 1 member C3 (AKR1C3).